A 215-amino-acid polypeptide reads, in one-letter code: NADH-quinone oxidoreductase subunit C (215 aa).

It belongs to the complex I 30 kDa subunit family. NDH-1 is composed of 14 different subunits. Subunits NuoB, C, D, E, F, and G constitute the peripheral sector of the complex.

The protein localises to the cell inner membrane. It catalyses the reaction a quinone + NADH + 5 H(+)(in) = a quinol + NAD(+) + 4 H(+)(out). In terms of biological role, NDH-1 shuttles electrons from NADH, via FMN and iron-sulfur (Fe-S) centers, to quinones in the respiratory chain. The immediate electron acceptor for the enzyme in this species is believed to be ubiquinone. Couples the redox reaction to proton translocation (for every two electrons transferred, four hydrogen ions are translocated across the cytoplasmic membrane), and thus conserves the redox energy in a proton gradient. This Methylobacterium radiotolerans (strain ATCC 27329 / DSM 1819 / JCM 2831 / NBRC 15690 / NCIMB 10815 / 0-1) protein is NADH-quinone oxidoreductase subunit C.